Reading from the N-terminus, the 245-residue chain is 1-(5-phosphoribosyl)-5-[(5-phosphoribosylamino)methylideneamino] imidazole-4-carboxamide isomerase (245 aa).

D7 acts as the Proton acceptor in catalysis. Residue D129 is the Proton donor of the active site.

Belongs to the HisA/HisF family.

Its subcellular location is the cytoplasm. It catalyses the reaction 1-(5-phospho-beta-D-ribosyl)-5-[(5-phospho-beta-D-ribosylamino)methylideneamino]imidazole-4-carboxamide = 5-[(5-phospho-1-deoxy-D-ribulos-1-ylimino)methylamino]-1-(5-phospho-beta-D-ribosyl)imidazole-4-carboxamide. The protein operates within amino-acid biosynthesis; L-histidine biosynthesis; L-histidine from 5-phospho-alpha-D-ribose 1-diphosphate: step 4/9. The sequence is that of 1-(5-phosphoribosyl)-5-[(5-phosphoribosylamino)methylideneamino] imidazole-4-carboxamide isomerase from Salmonella dublin (strain CT_02021853).